Here is a 435-residue protein sequence, read N- to C-terminus: Bud site selection protein RAX1 (435 aa).

The Cytoplasmic segment spans residues 1–297; the sequence is MKEELSKVSS…PFSNHTSISR (297 aa). An RGS domain is found at 159–248; sequence VDEIMKRRSQ…LEMDCFPKFL (90 aa). S167 is modified (phosphoserine). A helical membrane pass occupies residues 298–318; that stretch reads IGFGLLWLGIGFWIGYVLIFL. The Extracellular segment spans residues 319 to 325; it reads AYSRAIR. The chain crosses the membrane as a helical span at residues 326 to 346; the sequence is VVTVVPFTLGCYCIVCGMYQV. Residues 347 to 409 are Cytoplasmic-facing; sequence DIVYSWFGVT…FTRQLLRKRG (63 aa). A helical transmembrane segment spans residues 410–430; sequence LWCLLLVVGATAAFTVIFSCV. The Extracellular segment spans residues 431 to 435; that stretch reads PGRRV.

In terms of assembly, forms an heterodimeric complex with RAX2. Also interacts with BUD8 and BUD9.

The protein resides in the cell membrane. Its subcellular location is the bud neck. It is found in the bud tip. Required for the establishment of the bipolar budding pattern. Involved in selecting bud sites at both the distal and proximal poles of daughter cells as well as near previously used division sites on mother cells. The RAX1-RAX2 complex performs the asymmetric localization of the two cortical landmarks, BUD8 and BUD9, at the distal and proximal poles, respectively. This is Bud site selection protein RAX1 from Saccharomyces cerevisiae (strain ATCC 204508 / S288c) (Baker's yeast).